A 1914-amino-acid chain; its full sequence is Zinc finger protein Rlf (1914 aa).

At Ser-41 the chain carries Phosphoserine. Positions 521–540 (KQYRRRDLTDQHKEKRDKKP) are enriched in basic and acidic residues. Positions 521 to 541 (KQYRRRDLTDQHKEKRDKKPI) are disordered. The segment at 582 to 604 (YTCPVCIKKFKRKEMFVPHVMEH) adopts a C2H2-type 1 zinc-finger fold. A Glycyl lysine isopeptide (Lys-Gly) (interchain with G-Cter in SUMO2) cross-link involves residue Lys-622. A phosphoserine mark is found at Ser-632 and Ser-634. 5 C2H2-type zinc fingers span residues 671-696 (YPCP…KAEH), 714-736 (EKCT…EQVH), 742-766 (YMCV…KQKH), 771-795 (YKCE…EAQH), and 801-825 (YTCN…LSMH). Lys-839 participates in a covalent cross-link: Glycyl lysine isopeptide (Lys-Gly) (interchain with G-Cter in SUMO2). The tract at residues 882 to 907 (TETAENLKENSDSNSSDQLSHSSSAS) is disordered. The segment covering 893–907 (DSNSSDQLSHSSSAS) has biased composition (low complexity). Residues 954–979 (FTCGFDGCGSTYKNARGMQKHLRKVH) form a C2H2-type 7 zinc finger. Residues 993-1028 (LFPSLGNEHNQTTEKLDAEPKPCSDTNSDSPDEGLD) are disordered. Residues 1003–1014 (QTTEKLDAEPKP) show a composition bias toward basic and acidic residues. 2 consecutive C2H2-type zinc fingers follow at residues 1127 to 1152 (FFCE…LKKH) and 1172 to 1195 (FQCH…KNKH). A disordered region spans residues 1231–1290 (LGGDPSSNSEKPHCHPKKDECSSETDLESSCEETESKTSDISSPIGSHREEQEGREGRGS). A compositionally biased stretch (basic and acidic residues) spans 1240–1251 (EKPHCHPKKDEC). Residues 1252-1263 (SSETDLESSCEE) are compositionally biased toward acidic residues. Basic and acidic residues predominate over residues 1277-1289 (SHREEQEGREGRG). 5 C2H2-type zinc fingers span residues 1310–1335 (FHCI…RTVH), 1362–1387 (FACK…SDSH), 1407–1432 (FSCN…MEQH), 1444–1469 (IHCD…YYRH), and 1549–1574 (YPCM…KRTH). Lys-1423 is covalently cross-linked (Glycyl lysine isopeptide (Lys-Gly) (interchain with G-Cter in SUMO2)). Glycyl lysine isopeptide (Lys-Gly) (interchain with G-Cter in SUMO2) cross-links involve residues Lys-1599 and Lys-1611. Residues 1620–1654 (SERTEHSHSPGDSSAPIQNTDCCHSSERDGGQKGC) form a disordered region. Positions 1629–1642 (PGDSSAPIQNTDCC) are enriched in polar residues. Lys-1696 is covalently cross-linked (Glycyl lysine isopeptide (Lys-Gly) (interchain with G-Cter in SUMO2)). The segment at 1725–1757 (ESETRQHSSGQENTVKNPTHVPKENFRKHSQPR) is disordered. Over residues 1731 to 1741 (HSSGQENTVKN) the composition is skewed to polar residues. Residue Lys-1762 forms a Glycyl lysine isopeptide (Lys-Gly) (interchain with G-Cter in SUMO2) linkage. The interval 1783-1807 (KEDDFDDWEPSEHLTLSNSSQSSND) is disordered. The span at 1796–1807 (LTLSNSSQSSND) shows a compositional bias: polar residues.

The protein belongs to the krueppel C2H2-type zinc-finger protein family. In terms of assembly, interacts with RIT1 and RIT2. As to expression, widely expressed in fetal and adult tissues.

Its subcellular location is the nucleus. May be involved in transcriptional regulation. The chain is Zinc finger protein Rlf (RLF) from Homo sapiens (Human).